A 151-amino-acid chain; its full sequence is Large ribosomal subunit protein bL9 (151 aa).

Belongs to the bacterial ribosomal protein bL9 family.

Its function is as follows. Binds to the 23S rRNA. This Chlorobium chlorochromatii (strain CaD3) protein is Large ribosomal subunit protein bL9.